The primary structure comprises 406 residues: Phosphopentomutase (406 aa).

Positions 10, 305, 310, 346, 347, and 358 each coordinate Mn(2+).

Belongs to the phosphopentomutase family. It depends on Mn(2+) as a cofactor.

It is found in the cytoplasm. It carries out the reaction 2-deoxy-alpha-D-ribose 1-phosphate = 2-deoxy-D-ribose 5-phosphate. It catalyses the reaction alpha-D-ribose 1-phosphate = D-ribose 5-phosphate. Its pathway is carbohydrate degradation; 2-deoxy-D-ribose 1-phosphate degradation; D-glyceraldehyde 3-phosphate and acetaldehyde from 2-deoxy-alpha-D-ribose 1-phosphate: step 1/2. Isomerase that catalyzes the conversion of deoxy-ribose 1-phosphate (dRib-1-P) and ribose 1-phosphate (Rib-1-P) to deoxy-ribose 5-phosphate (dRib-5-P) and ribose 5-phosphate (Rib-5-P), respectively. The protein is Phosphopentomutase of Vibrio vulnificus (strain CMCP6).